Here is a 172-residue protein sequence, read N- to C-terminus: Adenine phosphoribosyltransferase (172 aa).

This sequence belongs to the purine/pyrimidine phosphoribosyltransferase family. In terms of assembly, homodimer.

The protein localises to the cytoplasm. The catalysed reaction is AMP + diphosphate = 5-phospho-alpha-D-ribose 1-diphosphate + adenine. The protein operates within purine metabolism; AMP biosynthesis via salvage pathway; AMP from adenine: step 1/1. In terms of biological role, catalyzes a salvage reaction resulting in the formation of AMP, that is energically less costly than de novo synthesis. The sequence is that of Adenine phosphoribosyltransferase from Staphylococcus epidermidis (strain ATCC 35984 / DSM 28319 / BCRC 17069 / CCUG 31568 / BM 3577 / RP62A).